We begin with the raw amino-acid sequence, 455 residues long: MARPIVAIIGRPNVGKSTLVNRLCRSREAIVDDKPGVTRDRTYQDGFWGDREFKVVDTGGLVFDDDSEFLPEIREQANLALAEASVALVIVDGQQGVTAADESIAEWLRTQPCPTLVAVNKCESPDQGLAMAAEFWRLGLGEPFPISAIHGAGTGDLLDRVLSLLPPKHEEPEEDEPIQMAIIGRPNVGKSSLLNAICGEPRAIVSPIRGTTRDTIDTRLEREGHPWRLIDTAGIRRRRSVNYGPEFFGINRSFKAIERSDVCVLVIDALDGVTEQDQRLAGRIEDDGRACVLVVNKWDAVEKDSHTMPMVEKELRAKLYFLDWATMLFTSALTGQRVESIFALASLAVEQHRRRVSTSVVNEVLKEALSWRSPPTSRGGRQGRLYYGTQVASRPPSFTLFVNDPKLFGDTYRRYVERQLREGLGFDGTPLKLFWRGKQQRAAERELARQQNRLG.

EngA-type G domains lie at 4-169 and 178-353; these read PIVA…PPKH and IQMA…EQHR. GTP-binding positions include 10 to 17, 57 to 61, 120 to 123, 184 to 191, 231 to 235, and 296 to 299; these read GRPNVGKS, DTGGL, NKCE, DTAGI, and NKWD. Positions 354–439 constitute a KH-like domain; it reads RRVSTSVVNE…PLKLFWRGKQ (86 aa).

Belongs to the TRAFAC class TrmE-Era-EngA-EngB-Septin-like GTPase superfamily. EngA (Der) GTPase family. As to quaternary structure, associates with the 50S ribosomal subunit.

Its function is as follows. GTPase that plays an essential role in the late steps of ribosome biogenesis. In Prochlorococcus marinus (strain MIT 9313), this protein is GTPase Der.